The primary structure comprises 483 residues: Glutamyl-tRNA(Gln) amidotransferase subunit A (483 aa).

Residues Lys76 and Ser151 each act as charge relay system in the active site. The Acyl-ester intermediate role is filled by Ser175.

The protein belongs to the amidase family. GatA subfamily. In terms of assembly, heterotrimer of A, B and C subunits.

The catalysed reaction is L-glutamyl-tRNA(Gln) + L-glutamine + ATP + H2O = L-glutaminyl-tRNA(Gln) + L-glutamate + ADP + phosphate + H(+). Functionally, allows the formation of correctly charged Gln-tRNA(Gln) through the transamidation of misacylated Glu-tRNA(Gln) in organisms which lack glutaminyl-tRNA synthetase. The reaction takes place in the presence of glutamine and ATP through an activated gamma-phospho-Glu-tRNA(Gln). The sequence is that of Glutamyl-tRNA(Gln) amidotransferase subunit A from Pseudomonas syringae pv. syringae (strain B728a).